Here is a 424-residue protein sequence, read N- to C-terminus: Virion nicking-joining enzyme (424 aa).

Belongs to the orthopoxvirus OPG042 family.

Its subcellular location is the virion. In terms of biological role, DNA nicking enzyme that cleaves extruded cruciform DNA at its tip. Probably nicks viral hairpins. This chain is Virion nicking-joining enzyme (OPG042), found in Cynomys gunnisoni (Gunnison's prairie dog).